The primary structure comprises 604 residues: Kelch-like protein 15 (604 aa).

The region spanning 31–98 is the BTB domain; the sequence is LDVTLVIEDH…MYYGTIELSM (68 aa). In terms of domain architecture, BACK spans 133-237; the sequence is CAEIMRLLDD…TPSSVFEKVK (105 aa). Kelch repeat units follow at residues 328-379, 381-426, 428-473, 489-542, and 544-590; these read FVFL…VIGK, IYAV…VLNN, LFIT…NKSK, KLYV…VLDK, and IMVL…VCNL.

Homodimer. Dimerization does not affect PPP2R5B-binding, but is required for its proteasomal degradation. Interacts with CUL3. Directly interacts with PPP2R5B; this interaction leads to PPP2R5B proteasomal degradation. Interacts with RBBP8/CtIP; this interaction leads to RBBP8 proteasomal degradation. Interacts with PACMP micropeptide; interaction prevents ubiquitination and degradation of RBBP8/CtIP.

It is found in the nucleus. The protein operates within protein modification; protein ubiquitination. Its function is as follows. Substrate-specific adapter for CUL3 E3 ubiquitin-protein ligase complex. Acts as an adapter for CUL3 to target the serine/threonine-protein phosphatase 2A (PP2A) subunit PPP2R5B for ubiquitination and subsequent proteasomal degradation, thus promoting exchange with other regulatory subunits and regulating PP2A holoenzyme composition. Acts as an adapter for CUL3 to target the DNA-end resection factor RBBP8/CtIP for ubiquitination and subsequent proteasomal degradation. Through the regulation of RBBP8/CtIP protein turnover, plays a key role in DNA damage response, favoring DNA double-strand repair through error-prone non-homologous end joining (NHEJ) over error-free, RBBP8-mediated homologous recombination (HR). The protein is Kelch-like protein 15 (Klhl15) of Mus musculus (Mouse).